Consider the following 944-residue polypeptide: Isoleucine--tRNA ligase (944 aa).

A 'HIGH' region motif is present at residues 58–68 (PYANGQIHIGH). E568 is an L-isoleucyl-5'-AMP binding site. Positions 609-613 (KMSKS) match the 'KMSKS' region motif. Position 612 (K612) interacts with ATP. Positions 907, 910, 927, and 930 each coordinate Zn(2+).

It belongs to the class-I aminoacyl-tRNA synthetase family. IleS type 1 subfamily. As to quaternary structure, monomer. Zn(2+) is required as a cofactor.

It is found in the cytoplasm. It carries out the reaction tRNA(Ile) + L-isoleucine + ATP = L-isoleucyl-tRNA(Ile) + AMP + diphosphate. Catalyzes the attachment of isoleucine to tRNA(Ile). As IleRS can inadvertently accommodate and process structurally similar amino acids such as valine, to avoid such errors it has two additional distinct tRNA(Ile)-dependent editing activities. One activity is designated as 'pretransfer' editing and involves the hydrolysis of activated Val-AMP. The other activity is designated 'posttransfer' editing and involves deacylation of mischarged Val-tRNA(Ile). The chain is Isoleucine--tRNA ligase from Idiomarina loihiensis (strain ATCC BAA-735 / DSM 15497 / L2-TR).